A 293-amino-acid chain; its full sequence is 33 kDa chaperonin (293 aa).

Intrachain disulfides connect cysteine 238-cysteine 240 and cysteine 271-cysteine 274.

Belongs to the HSP33 family. Post-translationally, under oxidizing conditions two disulfide bonds are formed involving the reactive cysteines. Under reducing conditions zinc is bound to the reactive cysteines and the protein is inactive.

The protein localises to the cytoplasm. Redox regulated molecular chaperone. Protects both thermally unfolding and oxidatively damaged proteins from irreversible aggregation. Plays an important role in the bacterial defense system toward oxidative stress. The polypeptide is 33 kDa chaperonin (Staphylococcus aureus (strain Mu3 / ATCC 700698)).